The following is a 372-amino-acid chain: N-methyl-L-tryptophan oxidase (372 aa).

Residue 4 to 34 (DLIIIGSGSVGAAAGYYATRAGLNVLMTDAH) coordinates FAD. At Cys-308 the chain carries S-8alpha-FAD cysteine.

It belongs to the MSOX/MTOX family. MTOX subfamily. Monomer. It depends on FAD as a cofactor.

The enzyme catalyses N(alpha)-methyl-L-tryptophan + O2 + H2O = L-tryptophan + formaldehyde + H2O2. In terms of biological role, catalyzes the oxidative demethylation of N-methyl-L-tryptophan. This chain is N-methyl-L-tryptophan oxidase, found in Escherichia coli O9:H4 (strain HS).